A 299-amino-acid polypeptide reads, in one-letter code: HTH-type transcriptional regulator PgrR (299 aa).

Positions 4 to 61 (EEIADLMAFVVVAEERSFTRAAARLSMAQSALSQIVRRIEERLGLRLLTRTTRSVVPT) constitute an HTH lysR-type domain. A DNA-binding region (H-T-H motif) is located at residues 21 to 40 (FTRAAARLSMAQSALSQIVR).

The protein belongs to the LysR transcriptional regulatory family.

Functionally, regulates the expression of genes involved in peptidoglycan (PG) degradation. Could play a role in switch control between recycling and degradation of PG peptides. Negatively regulates the expression of the ycjY-ymjD-ymjC-mpaA operon by binding to the PgrR-box. In addition, other genes are predicted to be under the control of PgrR, including genes related to membrane formation and function. The protein is HTH-type transcriptional regulator PgrR (pgrR) of Escherichia coli (strain K12).